A 637-amino-acid chain; its full sequence is Threonine--tRNA ligase (637 aa).

Residues 1-61 enclose the TGS domain; sequence MIKITLKDGK…NEDSTLEILT (61 aa). Residues 242 to 532 are catalytic; sequence DHRKLGKELG…LTEHYAGAFP (291 aa). The Zn(2+) site is built by cysteine 333, histidine 384, and histidine 509.

Belongs to the class-II aminoacyl-tRNA synthetase family. As to quaternary structure, homodimer. Requires Zn(2+) as cofactor.

The protein localises to the cytoplasm. It catalyses the reaction tRNA(Thr) + L-threonine + ATP = L-threonyl-tRNA(Thr) + AMP + diphosphate + H(+). Its function is as follows. Catalyzes the attachment of threonine to tRNA(Thr) in a two-step reaction: L-threonine is first activated by ATP to form Thr-AMP and then transferred to the acceptor end of tRNA(Thr). Also edits incorrectly charged L-seryl-tRNA(Thr). This chain is Threonine--tRNA ligase, found in Clostridium novyi (strain NT).